The sequence spans 280 residues: Pre-mRNA-splicing factor PRP21 (280 aa).

An SURP motif 1 repeat occupies 11–49 (DIKTTVNYIKQHGVEFENKLLEDERFSFIKKDDPLHEYY). Residues 53-72 (MNEPTDTVSGEDNDRKSERE) are disordered. One copy of the SURP motif 2 repeat lies at 95–135 (VIKLTARYYAKDKSIVEQMISKDGEARLNFMNSSHPLHKTF). Composition is skewed to basic and acidic residues over residues 246 to 261 (EKIVSDQGKQKGGDSK) and 269 to 280 (AVGETRLKKSKK). Positions 246-280 (EKIVSDQGKQKGGDSKGKKRKIRAVGETRLKKSKK) are disordered.

In terms of assembly, belongs to the CWC complex (or CEF1-associated complex), a spliceosome sub-complex reminiscent of a late-stage spliceosome composed of the U2, U5 and U6 snRNAs and at least BUD13, BUD31, BRR2, CDC40, CEF1, CLF1, CUS1, CWC2, CWC15, CWC21, CWC22, CWC23, CWC24, CWC25, CWC27, ECM2, HSH155, IST3, ISY1, LEA1, MSL1, NTC20, PRP8, PRP9, PRP11, PRP19, PRP21, PRP22, PRP45, PRP46, SLU7, SMB1, SMD1, SMD2, SMD3, SMX2, SMX3, SNT309, SNU114, SPP2, SYF1, SYF2, RSE1 and YJU2.

The protein localises to the nucleus. Its function is as follows. mRNA splicing factors, PRP9, PRP11, and PRP21, are necessary for binding of the U2 snRNP to the pre-mRNA in an early step of spliceosome assembly. The protein is Pre-mRNA-splicing factor PRP21 (PRP21) of Saccharomyces cerevisiae (strain ATCC 204508 / S288c) (Baker's yeast).